A 174-amino-acid polypeptide reads, in one-letter code: MARFLVALALFGVVAMTAATGDAPKEWSGKPWLGKFVAEVTDKSENWEAFVDALGLPEQFGRAPVKTIQKIYKQGDHYHHIFALPDKNFEKDIEFTLGQEVEIKQGEHIAKTKYSEDGEKLVADVSIPTKGKTIRSEYEVQGDQLIKTYKTGDIVAKKWFKKVANPTEAPAQAA.

The N-terminal stretch at 1-19 (MARFLVALALFGVVAMTAA) is a signal peptide. The interval 26–57 (EWSGKPWLGKFVAEVTDKSENWEAFVDALGLP) is SAHS-c1. Residues 72 to 100 (YKQGDHYHHIFALPDKNFEKDIEFTLGQE) form an SAHS-c2 region. The tract at residues 113-162 (KYSEDGEKLVADVSIPTKGKTIRSEYEVQGDQLIKTYKTGDIVAKKWFKK) is SAHS-c3.

It belongs to the Secretory-abundant heat soluble protein (SAHS) family.

Its subcellular location is the secreted. In terms of biological role, secreted heat soluble protein acting as a molecular shield in water-deficient condition. Tardigrade-specific intrinsically disordered proteins (TDPs) are essential for desiccation tolerance by forming non-crystalline amorphous solids upon desiccation, and this vitrified state mirrors their protective capabilities. The protein is Secretory-abundant heat soluble protein 68234 of Hypsibius exemplaris (Freshwater tardigrade).